Consider the following 171-residue polypeptide: NRR repressor homolog 2 (171 aa).

A compositionally biased stretch (basic and acidic residues) spans 1–12; the sequence is MEARLSTGEKTK. Disordered stretches follow at residues 1–45, 65–94, and 119–143; these read MEAR…QQQM, AALPSCREDDVSGGGGGEQRQKRPRAAPWR, and TTKGQDGNCKKGKRSEANAAAEEDK. The segment covering 26–43 has biased composition (acidic residues); it reads PEEETAAETTTSEEEEQQ.

It belongs to the NPR1-interactor family. Interacts with NPR1/NH1. Interacts with NPR3/NH3.

Its subcellular location is the nucleus. Binds to and weakly represses NPR1/NH1-mediated transcriptional activation of LG2 in vitro. This chain is NRR repressor homolog 2, found in Oryza sativa subsp. japonica (Rice).